Consider the following 510-residue polypeptide: Probable gamma-aminobutyrate transaminase 3, mitochondrial (510 aa).

A mitochondrion-targeting transit peptide spans Met1–Tyr41. A pyridoxal 5'-phosphate-binding site is contributed by Gly166–Ser167. Residue Tyr199 coordinates substrate. Asp306 lines the pyridoxal 5'-phosphate pocket. Lys335 is a binding site for substrate. The residue at position 335 (Lys335) is an N6-(pyridoxal phosphate)lysine.

This sequence belongs to the class-III pyridoxal-phosphate-dependent aminotransferase family.

The protein localises to the mitochondrion. The enzyme catalyses 4-aminobutanoate + pyruvate = succinate semialdehyde + L-alanine. It carries out the reaction 4-aminobutanoate + glyoxylate = succinate semialdehyde + glycine. Functionally, transaminase that degrades gamma-amino butyric acid (GABA). The protein is Probable gamma-aminobutyrate transaminase 3, mitochondrial of Oryza sativa subsp. indica (Rice).